The sequence spans 416 residues: Gamma-glutamyl phosphate reductase (416 aa).

This sequence belongs to the gamma-glutamyl phosphate reductase family.

The protein resides in the cytoplasm. It catalyses the reaction L-glutamate 5-semialdehyde + phosphate + NADP(+) = L-glutamyl 5-phosphate + NADPH + H(+). Its pathway is amino-acid biosynthesis; L-proline biosynthesis; L-glutamate 5-semialdehyde from L-glutamate: step 2/2. Catalyzes the NADPH-dependent reduction of L-glutamate 5-phosphate into L-glutamate 5-semialdehyde and phosphate. The product spontaneously undergoes cyclization to form 1-pyrroline-5-carboxylate. This Vibrio parahaemolyticus serotype O3:K6 (strain RIMD 2210633) protein is Gamma-glutamyl phosphate reductase.